Reading from the N-terminus, the 410-residue chain is uncharacterized protein (410 aa).

A run of 11 helical transmembrane segments spans residues 14 to 34 (IIIG…FLAI), 48 to 68 (GLVI…GGYI), 82 to 102 (IFGW…WVFF), 140 to 160 (YAAI…FGSS), 164 to 184 (TPFL…ALQF), 212 to 232 (YLFT…SQFS), 251 to 271 (LYGL…FPIV), 279 to 299 (PLCS…IFTV), 303 to 323 (VPSI…LFSM), 342 to 362 (GAIG…GICI), and 371 to 391 (IYIF…LAFA).

This sequence belongs to the major facilitator superfamily. TCR/Tet family.

Its subcellular location is the cell membrane. This is an uncharacterized protein from Bacillus subtilis (strain 168).